The primary structure comprises 205 residues: RNA pyrophosphohydrolase (205 aa).

The 144-residue stretch at 6–149 (GFRPNVGIVL…KRGVYARALR (144 aa)) folds into the Nudix hydrolase domain. Residues 38–59 (GGMNTDETPVEAMYRELREETG) carry the Nudix box motif. Positions 177 to 205 (PGSSAAGHDSPRKRPRKRSGARPMRINND) are disordered. Residues 187–196 (PRKRPRKRSG) are compositionally biased toward basic residues.

It belongs to the Nudix hydrolase family. RppH subfamily. A divalent metal cation serves as cofactor.

Functionally, accelerates the degradation of transcripts by removing pyrophosphate from the 5'-end of triphosphorylated RNA, leading to a more labile monophosphorylated state that can stimulate subsequent ribonuclease cleavage. The polypeptide is RNA pyrophosphohydrolase (Xanthomonas oryzae pv. oryzae (strain MAFF 311018)).